Here is a 363-residue protein sequence, read N- to C-terminus: Histone-lysine N-methyltransferase ASHH3 (363 aa).

In terms of domain architecture, AWS spans Asp-63–His-114. In terms of domain architecture, SET spans Lys-116–Gln-233. In terms of domain architecture, Post-SET spans Ala-239 to Gly-255.

The protein belongs to the class V-like SAM-binding methyltransferase superfamily. Histone-lysine methyltransferase family. SET2 subfamily.

Its subcellular location is the nucleus. It localises to the chromosome. The protein resides in the centromere. It catalyses the reaction L-lysyl-[histone] + S-adenosyl-L-methionine = N(6)-methyl-L-lysyl-[histone] + S-adenosyl-L-homocysteine + H(+). Its function is as follows. Histone methyltransferase. The chain is Histone-lysine N-methyltransferase ASHH3 (ASHH3) from Arabidopsis thaliana (Mouse-ear cress).